A 297-amino-acid chain; its full sequence is Homoserine kinase (297 aa).

Residue 84 to 94 (PPARGLGSSAT) coordinates ATP.

It belongs to the GHMP kinase family. Homoserine kinase subfamily.

The protein resides in the cytoplasm. It carries out the reaction L-homoserine + ATP = O-phospho-L-homoserine + ADP + H(+). It functions in the pathway amino-acid biosynthesis; L-threonine biosynthesis; L-threonine from L-aspartate: step 4/5. Catalyzes the ATP-dependent phosphorylation of L-homoserine to L-homoserine phosphate. This is Homoserine kinase (thrB) from Aquifex aeolicus (strain VF5).